The primary structure comprises 292 residues: MPWIQLIIDTKAKYAEQVGDMLSANGAQAVTFVDAKDTPMYEPKPGEVMLWPETQVMGLYEADYDMDGVVARMSKSKVLGADFPHKLDQLEDKDWEREWMDNFHPMRFGQRLWICPSWRDVPDPSAVNVMLDPGLAFGTGTHPTTALCLRWLDALELSDKLVVDFGCGSGILGIAAIKLGAKRVVGIDIDPQALLSSQTNADRNHIGDKIELYLPEHQPELKADVVLANILAGPLRDLREVITAYCKSGGKLVLSGILAEQAQGINDLYSQDFHMEPIEIDGEWARVSGKRK.

S-adenosyl-L-methionine-binding residues include T145, G166, D188, and N229.

This sequence belongs to the methyltransferase superfamily. PrmA family.

It is found in the cytoplasm. It catalyses the reaction L-lysyl-[protein] + 3 S-adenosyl-L-methionine = N(6),N(6),N(6)-trimethyl-L-lysyl-[protein] + 3 S-adenosyl-L-homocysteine + 3 H(+). Functionally, methylates ribosomal protein L11. The chain is Ribosomal protein L11 methyltransferase from Pseudoalteromonas atlantica (strain T6c / ATCC BAA-1087).